The sequence spans 95 residues: Late cornified envelope protein 7A (95 aa).

This sequence belongs to the LCE family.

Its function is as follows. Precursors of the cornified envelope of the stratum corneum. This is Late cornified envelope protein 7A from Homo sapiens (Human).